The following is a 393-amino-acid chain: Elongation factor Tu (393 aa).

The tr-type G domain maps to 10–203 (KPHVNIGTIG…AVDSFIPDPV (194 aa)). The tract at residues 19–26 (GHVDHGKT) is G1. 19-26 (GHVDHGKT) contributes to the GTP binding site. Mg(2+) is bound at residue threonine 26. The G2 stretch occupies residues 60–64 (GITIS). Residues 81-84 (DCPG) are G3. GTP-binding positions include 81–85 (DCPGH) and 136–139 (NKVD). Residues 136–139 (NKVD) are G4. The interval 173–175 (SAL) is G5.

The protein belongs to the TRAFAC class translation factor GTPase superfamily. Classic translation factor GTPase family. EF-Tu/EF-1A subfamily. Monomer.

The protein resides in the cytoplasm. It catalyses the reaction GTP + H2O = GDP + phosphate + H(+). Its function is as follows. GTP hydrolase that promotes the GTP-dependent binding of aminoacyl-tRNA to the A-site of ribosomes during protein biosynthesis. This chain is Elongation factor Tu, found in Pelodictyon phaeoclathratiforme (strain DSM 5477 / BU-1).